Here is a 169-residue protein sequence, read N- to C-terminus: 2-C-methyl-D-erythritol 2,4-cyclodiphosphate synthase (169 aa).

Positions 13 and 15 each coordinate a divalent metal cation. 4-CDP-2-C-methyl-D-erythritol 2-phosphate is bound by residues 13–15 (DVH) and 39–40 (HS). His47 is a binding site for a divalent metal cation. 4-CDP-2-C-methyl-D-erythritol 2-phosphate-binding positions include 61–63 (DIG), 66–70 (FPDTD), Phe144, and Arg147.

It belongs to the IspF family. Homotrimer. The cofactor is a divalent metal cation.

It carries out the reaction 4-CDP-2-C-methyl-D-erythritol 2-phosphate = 2-C-methyl-D-erythritol 2,4-cyclic diphosphate + CMP. It participates in isoprenoid biosynthesis; isopentenyl diphosphate biosynthesis via DXP pathway; isopentenyl diphosphate from 1-deoxy-D-xylulose 5-phosphate: step 4/6. Functionally, involved in the biosynthesis of isopentenyl diphosphate (IPP) and dimethylallyl diphosphate (DMAPP), two major building blocks of isoprenoid compounds. Catalyzes the conversion of 4-diphosphocytidyl-2-C-methyl-D-erythritol 2-phosphate (CDP-ME2P) to 2-C-methyl-D-erythritol 2,4-cyclodiphosphate (ME-CPP) with a corresponding release of cytidine 5-monophosphate (CMP). The polypeptide is 2-C-methyl-D-erythritol 2,4-cyclodiphosphate synthase (Cupriavidus pinatubonensis (strain JMP 134 / LMG 1197) (Cupriavidus necator (strain JMP 134))).